Here is a 170-residue protein sequence, read N- to C-terminus: Acireductone dioxygenase (170 aa).

The Fe(2+) site is built by H99, H101, E105, and H144. The Ni(2+) site is built by H99, H101, E105, and H144.

It belongs to the acireductone dioxygenase (ARD) family. As to quaternary structure, monomer. It depends on Fe(2+) as a cofactor. Ni(2+) is required as a cofactor.

The catalysed reaction is 1,2-dihydroxy-5-(methylsulfanyl)pent-1-en-3-one + O2 = 3-(methylsulfanyl)propanoate + CO + formate + 2 H(+). It carries out the reaction 1,2-dihydroxy-5-(methylsulfanyl)pent-1-en-3-one + O2 = 4-methylsulfanyl-2-oxobutanoate + formate + 2 H(+). It participates in amino-acid biosynthesis; L-methionine biosynthesis via salvage pathway; L-methionine from S-methyl-5-thio-alpha-D-ribose 1-phosphate: step 5/6. Its function is as follows. Catalyzes 2 different reactions between oxygen and the acireductone 1,2-dihydroxy-3-keto-5-methylthiopentene (DHK-MTPene) depending upon the metal bound in the active site. Fe-containing acireductone dioxygenase (Fe-ARD) produces formate and 2-keto-4-methylthiobutyrate (KMTB), the alpha-ketoacid precursor of methionine in the methionine recycle pathway. Ni-containing acireductone dioxygenase (Ni-ARD) produces methylthiopropionate, carbon monoxide and formate, and does not lie on the methionine recycle pathway. The chain is Acireductone dioxygenase from Bacillus cereus (strain ATCC 14579 / DSM 31 / CCUG 7414 / JCM 2152 / NBRC 15305 / NCIMB 9373 / NCTC 2599 / NRRL B-3711).